The primary structure comprises 459 residues: D(1)-like dopamine receptor (459 aa).

The Extracellular segment spans residues 1–23 (MAQNFSTVGDGKQMLLERDSSKR). Asn4 carries an N-linked (GlcNAc...) asparagine glycan. Residues 24–49 (VLTGCFLSLLIFTTLLGNTLVCVAVT) form a helical membrane-spanning segment. At 50-60 (KFRHLRSKVTN) the chain is on the cytoplasmic side. The helical transmembrane segment at 61 to 87 (FFVISLAISDLLVAILVMPWKAATEIM) threads the bilayer. Residues 88 to 96 (GFWPFGEFC) lie on the Extracellular side of the membrane. A disulfide bridge links Cys96 with Cys187. The chain crosses the membrane as a helical span at residues 97-119 (NIWVAFDIMCSTASILNLCVISV). At 120 to 138 (DRYWAISSPFRYERKMTPK) the chain is on the cytoplasmic side. A helical membrane pass occupies residues 139–164 (VACLMISVAWTLSVLISFIPVQLNWH). The Extracellular segment spans residues 165–191 (KAQTASYVELNGTYAGDLPPDNCDSSL). Residues 192-216 (NRTYAISSSLISFYIPVAIMIVTYT) form a helical membrane-spanning segment. Residues 217-269 (RIYRIAQKQIRRISALERAAESAQNRHSSMGNSLSMESECSFKMSFKRETKVL) are Cytoplasmic-facing. The chain crosses the membrane as a helical span at residues 270–297 (KTLSVIMGVFVCCWLPFFILNCMVPFCE). Over 298-311 (ADDTTDFPCISSTT) the chain is Extracellular. The helical transmembrane segment at 312-333 (FDVFVWFGWANSSLNPIIYAFN) threads the bilayer. The Cytoplasmic portion of the chain corresponds to 334 to 459 (ADFRKAFSIL…QNGQHKSMSC (126 aa)).

This sequence belongs to the G-protein coupled receptor 1 family.

The protein localises to the cell membrane. It is found in the cell projection. The protein resides in the cilium membrane. Functionally, receptor for dopamine. The protein is D(1)-like dopamine receptor (d14) of Takifugu rubripes (Japanese pufferfish).